The following is a 543-amino-acid chain: Chaperonin GroEL (543 aa).

Residues 30-33, Lys51, 87-91, Gly415, 480-482, and Asp496 contribute to the ATP site; these read TLGP, DGTTT, and DAA.

The protein belongs to the chaperonin (HSP60) family. As to quaternary structure, forms a cylinder of 14 subunits composed of two heptameric rings stacked back-to-back. Interacts with the co-chaperonin GroES.

The protein resides in the cytoplasm. The enzyme catalyses ATP + H2O + a folded polypeptide = ADP + phosphate + an unfolded polypeptide.. In terms of biological role, together with its co-chaperonin GroES, plays an essential role in assisting protein folding. The GroEL-GroES system forms a nano-cage that allows encapsulation of the non-native substrate proteins and provides a physical environment optimized to promote and accelerate protein folding. This Hydrogenobaculum sp. (strain Y04AAS1) protein is Chaperonin GroEL.